The primary structure comprises 492 residues: GTPase Der (492 aa).

EngA-type G domains are found at residues 3–167 (PVVA…PAPE) and 188–363 (ICIA…AQYA). GTP is bound by residues 9-16 (GRPNVGKS), 56-60 (DTGGF), 119-122 (NKVE), 194-201 (GRPNVGKS), 241-245 (DTAGI), and 306-309 (NKWD). The region spanning 364-448 (YRINTGLLNR…PIRLLFRAKT (85 aa)) is the KH-like domain. The segment at 464 to 492 (VEKKEKKTTRRKKERKEQSRRKRVRDLKG) is disordered. Positions 469–492 (KKTTRRKKERKEQSRRKRVRDLKG) are enriched in basic residues.

It belongs to the TRAFAC class TrmE-Era-EngA-EngB-Septin-like GTPase superfamily. EngA (Der) GTPase family. As to quaternary structure, associates with the 50S ribosomal subunit.

In terms of biological role, GTPase that plays an essential role in the late steps of ribosome biogenesis. The chain is GTPase Der from Desulforapulum autotrophicum (strain ATCC 43914 / DSM 3382 / VKM B-1955 / HRM2) (Desulfobacterium autotrophicum).